Reading from the N-terminus, the 415-residue chain is MDPLSVLKEFTIRGDIDKIERVGANYRFGSEYSFPCATETAYRSKSGSLYTLEALVHYVKNQQLKHGEYMQSTVKNSVPAVTLPDRKPLLDYLTGRVASSDSIDFLLLQQQNAQSQKQNEEYRPDQDNSAFVSRENAIADMEVEDFGKSGEDVDYIMLIRSNERPLKSRDAILQCKNRDFYSVLVNSTKREEERQRIESHQRKDGLVAKSRLMGAEERGIVGFSSGGGDDNGYDANPKSKLHFKAGKIGEGVPIILVPSAFQTLITIYNVKEFLEDGVYIPNDVKAKEMKGLKPDCITVQKKFSRDRERVVTAYEVRDKPSALKPDDWDRVVAVFVLGKDWQFKDWPFKDHVEIFNKIIGFFLRFEDDSIESAKTVKQWNVKIISISKNKRHQDRAAALEVWEKLEEFVRSRSHS.

The protein belongs to the CDC73 family. In terms of assembly, component of the nuclear PAF1 complex (PAF1C), which consists of VIP2/ELF7/PAF1, VIP3/SKI8/WDR61, VIP4/LEO1, VIP5/RTF1, VIP6/ELF8/CTR9 and CDC73. As to expression, expressed in root tips, shoot apex, young leaves and flowers, especially in stamen filaments and carpels.

The protein localises to the nucleus. Component of the PAF1 complex (PAF1C) which is involved in histone modifications such as methylation on histone H3 'Lys-4' (H3K4me3). Involved in regulation of flowering time. Required for the expression of the flowering repressors FLC and MADS-box genes of the MAF family. Required for histone H3 trimethylation on 'Lys-4' (H3K4me3) at the FLC locus. Prevents trimethylation on 'Lys-27' (H3K27me3) at the same locus. The protein is Protein CDC73 homolog of Arabidopsis thaliana (Mouse-ear cress).